Reading from the N-terminus, the 684-residue chain is Sec1 family domain-containing protein 2 (684 aa).

It belongs to the STXBP/unc-18/SEC1 family.

In terms of biological role, may be involved in protein transport. This is Sec1 family domain-containing protein 2 (SCFD2) from Homo sapiens (Human).